Here is a 207-residue protein sequence, read N- to C-terminus: MGRERSGIVLVLCAPSGTGKTTLTRRLLTEFPRFAFSVSYTTRKPRNGEVDGKDYHFVTVEAFLRLRDAGFFAEWAEVHGNFYGTPLKATLDLLDEGRDVLFDIDVQGARQLRASLQRGRYVFIMPPSRDELEHRLRARGTDDEETIARRLANAAKELREARRFDAWIVNDDLERAYDELRAAYIEETLSPECRSAFLDGLLQGWND.

A Guanylate kinase-like domain is found at 7-185; it reads GIVLVLCAPS…AYDELRAAYI (179 aa). 14–21 provides a ligand contact to ATP; it reads APSGTGKT.

The protein belongs to the guanylate kinase family.

It localises to the cytoplasm. The catalysed reaction is GMP + ATP = GDP + ADP. Its function is as follows. Essential for recycling GMP and indirectly, cGMP. The sequence is that of Guanylate kinase from Nitratidesulfovibrio vulgaris (strain ATCC 29579 / DSM 644 / CCUG 34227 / NCIMB 8303 / VKM B-1760 / Hildenborough) (Desulfovibrio vulgaris).